The sequence spans 512 residues: Cytochrome P450 82C3 (512 aa).

Residues 1-21 (MDTSLFSLFVSILVFVFIALF) form a helical membrane-spanning segment. Residue Cys-451 participates in heme binding.

Belongs to the cytochrome P450 family. The cofactor is heme.

Its subcellular location is the membrane. The sequence is that of Cytochrome P450 82C3 (CYP82C3) from Arabidopsis thaliana (Mouse-ear cress).